Consider the following 260-residue polypeptide: Pyridoxine 5'-phosphate synthase (260 aa).

3-amino-2-oxopropyl phosphate is bound at residue Asn15. A 1-deoxy-D-xylulose 5-phosphate-binding site is contributed by 17-18 (DH). Arg26 lines the 3-amino-2-oxopropyl phosphate pocket. His51 (proton acceptor) is an active-site residue. 1-deoxy-D-xylulose 5-phosphate is bound by residues Arg53 and His58. The active-site Proton acceptor is Glu78. Thr108 serves as a coordination point for 1-deoxy-D-xylulose 5-phosphate. His199 (proton donor) is an active-site residue. 3-amino-2-oxopropyl phosphate-binding positions include Gly200 and 221–222 (GH).

The protein belongs to the PNP synthase family. In terms of assembly, homooctamer; tetramer of dimers.

The protein localises to the cytoplasm. It catalyses the reaction 3-amino-2-oxopropyl phosphate + 1-deoxy-D-xylulose 5-phosphate = pyridoxine 5'-phosphate + phosphate + 2 H2O + H(+). Its pathway is cofactor biosynthesis; pyridoxine 5'-phosphate biosynthesis; pyridoxine 5'-phosphate from D-erythrose 4-phosphate: step 5/5. In terms of biological role, catalyzes the complicated ring closure reaction between the two acyclic compounds 1-deoxy-D-xylulose-5-phosphate (DXP) and 3-amino-2-oxopropyl phosphate (1-amino-acetone-3-phosphate or AAP) to form pyridoxine 5'-phosphate (PNP) and inorganic phosphate. The protein is Pyridoxine 5'-phosphate synthase of Cupriavidus metallidurans (strain ATCC 43123 / DSM 2839 / NBRC 102507 / CH34) (Ralstonia metallidurans).